A 1059-amino-acid polypeptide reads, in one-letter code: DNA-directed RNA polymerase subunit beta (1059 aa).

The protein belongs to the RNA polymerase beta chain family. In terms of assembly, in plastids the minimal PEP RNA polymerase catalytic core is composed of four subunits: alpha, beta, beta', and beta''. When a (nuclear-encoded) sigma factor is associated with the core the holoenzyme is formed, which can initiate transcription (Potential).

It localises to the plastid. The protein resides in the apicoplast. The enzyme catalyses RNA(n) + a ribonucleoside 5'-triphosphate = RNA(n+1) + diphosphate. In terms of biological role, DNA-dependent RNA polymerase catalyzes the transcription of DNA into RNA using the four ribonucleoside triphosphates as substrates. The sequence is that of DNA-directed RNA polymerase subunit beta (rpoB) from Eimeria tenella (Coccidian parasite).